Consider the following 159-residue polypeptide: SsrA-binding protein (159 aa).

Residues 134-159 (KLHDKRETSKERDWNRQKNRLLKERG) form a disordered region. Over residues 137–159 (DKRETSKERDWNRQKNRLLKERG) the composition is skewed to basic and acidic residues.

It belongs to the SmpB family.

It localises to the cytoplasm. Its function is as follows. Required for rescue of stalled ribosomes mediated by trans-translation. Binds to transfer-messenger RNA (tmRNA), required for stable association of tmRNA with ribosomes. tmRNA and SmpB together mimic tRNA shape, replacing the anticodon stem-loop with SmpB. tmRNA is encoded by the ssrA gene; the 2 termini fold to resemble tRNA(Ala) and it encodes a 'tag peptide', a short internal open reading frame. During trans-translation Ala-aminoacylated tmRNA acts like a tRNA, entering the A-site of stalled ribosomes, displacing the stalled mRNA. The ribosome then switches to translate the ORF on the tmRNA; the nascent peptide is terminated with the 'tag peptide' encoded by the tmRNA and targeted for degradation. The ribosome is freed to recommence translation, which seems to be the essential function of trans-translation. The chain is SsrA-binding protein from Rhizobium meliloti (strain 1021) (Ensifer meliloti).